Consider the following 188-residue polypeptide: ATP synthase subunit b (188 aa).

The helical transmembrane segment at 19–39 threads the bilayer; sequence VYVLGATIVSFLVLFLFITYF.

This sequence belongs to the ATPase B chain family. As to quaternary structure, F-type ATPases have 2 components, F(1) - the catalytic core - and F(0) - the membrane proton channel. F(1) has five subunits: alpha(3), beta(3), gamma(1), delta(1), epsilon(1). F(0) has three main subunits: a(1), b(2) and c(10-14). The alpha and beta chains form an alternating ring which encloses part of the gamma chain. F(1) is attached to F(0) by a central stalk formed by the gamma and epsilon chains, while a peripheral stalk is formed by the delta and b chains.

Its subcellular location is the cell membrane. Functionally, f(1)F(0) ATP synthase produces ATP from ADP in the presence of a proton or sodium gradient. F-type ATPases consist of two structural domains, F(1) containing the extramembraneous catalytic core and F(0) containing the membrane proton channel, linked together by a central stalk and a peripheral stalk. During catalysis, ATP synthesis in the catalytic domain of F(1) is coupled via a rotary mechanism of the central stalk subunits to proton translocation. In terms of biological role, component of the F(0) channel, it forms part of the peripheral stalk, linking F(1) to F(0). The polypeptide is ATP synthase subunit b (Mesomycoplasma hyopneumoniae (strain 7448) (Mycoplasma hyopneumoniae)).